The chain runs to 254 residues: MAAYKLVLIRHGESTWNLENRFSCWYDADLSPAGHEEAKRGGQALRDAGYEFDICLTSVQKRVIRTLWTVLDAIDQMWLPVVRTWRLNERHYGGLTALNKAETAAKHGEAQVKIWRRSYDVPPPPMEPDHPFYSNISKDRRYADLTEDQLPSYESPKDTIARALPFWNEEIVPQIKEGKRVLIAAHGNSLQGIAKHVEGLSEEAIMELNLPTGIPIVYELDKNLKPIKPMQFLGDEETVCKAMEAVAAQGKAKK.

Substrate contacts are provided by residues 10–17 (RHGESTWN) and 23–24 (SC). His11 functions as the Tele-phosphohistidine intermediate in the catalytic mechanism. Ser14 and Ser23 each carry phosphoserine. Position 26 is a phosphotyrosine (Tyr26). Residue Ser31 is modified to Phosphoserine. Residues Arg62, 89-92 (ERHY), and Lys100 contribute to the substrate site. The Proton donor/acceptor role is filled by Glu89. Lys106 bears the N6-acetyllysine mark. 116–117 (RR) contacts substrate. Ser118 carries the post-translational modification Phosphoserine. 187–188 (GN) lines the substrate pocket. Lys251 carries the post-translational modification N6-acetyllysine; alternate. Lys251 carries the N6-succinyllysine; alternate modification. N6-acetyllysine occurs at positions 253 and 254.

Belongs to the phosphoglycerate mutase family. BPG-dependent PGAM subfamily.

It carries out the reaction (2R)-2-phosphoglycerate = (2R)-3-phosphoglycerate. The enzyme catalyses (2R)-3-phospho-glyceroyl phosphate = (2R)-2,3-bisphosphoglycerate + H(+). The chain is Probable phosphoglycerate mutase 4 (PGAM4) from Pan troglodytes (Chimpanzee).